A 460-amino-acid polypeptide reads, in one-letter code: Cell death abnormality protein 8 (460 aa).

Over 1–45 (MYLKKHESKLLLIPKNEDKEDAGIIAVLTDRVPSVLIVRWFDLFC) the chain is Cytoplasmic. Residues 46-66 (FGFAMCSYVLDFFSDIGIAIF) form a helical membrane-spanning segment. Residues 67 to 77 (HFWAGRHLSGA) are Extracellular-facing. A helical transmembrane segment spans residues 78-98 (LVLTFALIPSVIINIISMVWM). Residues 99 to 123 (LDDEMHWKRRAHPRRTGTFELNQKR) lie on the Cytoplasmic side of the membrane. A helical membrane pass occupies residues 124–144 (FISLGKMITLCIFQMGPLFWY). Over 145–219 (YKALYYGWMF…YYISGKYPYW (75 aa)) the chain is Extracellular. Residues 220–240 (LYFQAASLTLSIISISWSVVV) traverse the membrane as a helical segment. Over 241–274 (QNRSLRMTRDDKVNIWPHEAVLQFCWRFLTILAR) the chain is Cytoplasmic. A helical transmembrane segment spans residues 275–295 (IITLVAFVLLFGIYVVFLIFG). Topologically, residues 296-320 (HLIVTLVHVIFLQALHIEACTHIEK) are extracellular. Residues 321–341 (LLLLINAMIHLFTPFNMAEGN) traverse the membrane as a helical segment. Topologically, residues 342–353 (TRYRYLVAYTVE) are cytoplasmic. Residues 354-374 (FIEMMIIFLLLPTPLDAFPLI) traverse the membrane as a helical segment. The Extracellular segment spans residues 375 to 378 (EKIR). The chain crosses the membrane as a helical span at residues 379 to 399 (IGVPATFFIGIFIMLIYYKFF). Topologically, residues 400-460 (HPNRRQDLEA…SLLEEDECHN (61 aa)) are cytoplasmic.

The protein belongs to the XK family. Cleavage by ced-3 activates ced-8 function in promoting phosphatidylserine exposure at the surface of apoptotic cells.

The protein localises to the cell membrane. In terms of biological role, acts downstream of ced-9 and caspase ced-3 to promote phosphatidylserine exposure on apoptotic cell surface, possibly by mediating phospholipid scrambling. Phosphatidylserine is a specific marker only present at the surface of apoptotic cells and acts as a specific signal for engulfment. Regulates apoptosis kinetics during embryonic development. Not required for engulfment of germ cell corpses. This Caenorhabditis briggsae protein is Cell death abnormality protein 8.